We begin with the raw amino-acid sequence, 851 residues long: Protein translocase subunit SecA (851 aa).

ATP-binding positions include Gln88, Gly106 to Thr110, and Asp496. Zn(2+)-binding residues include Cys828, Cys830, Cys839, and His840.

It belongs to the SecA family. In terms of assembly, monomer and homodimer. Part of the essential Sec protein translocation apparatus which comprises SecA, SecYEG and auxiliary proteins SecDF-YajC and YidC. Zn(2+) serves as cofactor.

The protein localises to the cell inner membrane. It is found in the cytoplasm. The catalysed reaction is ATP + H2O + cellular proteinSide 1 = ADP + phosphate + cellular proteinSide 2.. Functionally, part of the Sec protein translocase complex. Interacts with the SecYEG preprotein conducting channel. Has a central role in coupling the hydrolysis of ATP to the transfer of proteins into and across the cell membrane, serving as an ATP-driven molecular motor driving the stepwise translocation of polypeptide chains across the membrane. The polypeptide is Protein translocase subunit SecA (Helicobacter hepaticus (strain ATCC 51449 / 3B1)).